The primary structure comprises 280 residues: uncharacterized protein (280 aa).

The region spanning 26–127 (YFMSMKLLDV…TRVSILMRYY (102 aa)) is the KilA-N domain.

This is an uncharacterized protein from Vertebrata (FPV).